The following is a 667-amino-acid chain: Cyclin-dependent kinase 17 (667 aa).

Disordered regions lie at residues 1 to 70 (MTAY…SSLN) and 85 to 184 (DSEY…LRKM). Acidic residues-rich tracts occupy residues 99-111 (EDFDEEEEDEFED) and 119-144 (DEDDVEYEDEDDEDDIVVEEEEITPE). Residues 151-164 (TGVTTQTTPPSNNT) are compositionally biased toward polar residues. The 282-residue stretch at 328 to 609 (YEKLDKLGEG…AAEAVKHPFL (282 aa)) folds into the Protein kinase domain. ATP is bound by residues 334–342 (LGEGTYATV) and Lys-357. Residue Asp-449 is the Proton acceptor of the active site. Mg(2+)-binding residues include Asn-454 and Asp-467. The tract at residues 642 to 667 (HHHSSRRHHRGTLVKDKYRMHSSHHT) is disordered. Over residues 644–653 (HSSRRHHRGT) the composition is skewed to basic residues.

It belongs to the protein kinase superfamily. CMGC Ser/Thr protein kinase family. CDC2/CDKX subfamily. As to quaternary structure, interacts with cyy-1; the interaction is required to activate pct-1. The cofactor is Mg(2+).

It is found in the cytoplasm. The protein localises to the cell projection. Its subcellular location is the dendrite. It localises to the axon. It carries out the reaction L-seryl-[protein] + ATP = O-phospho-L-seryl-[protein] + ADP + H(+). The enzyme catalyses L-threonyl-[protein] + ATP = O-phospho-L-threonyl-[protein] + ADP + H(+). Its function is as follows. Serine/threonine-protein kinase, which, in association with cyy-1, regulates the trafficking of synaptic vesicles in the DA9 motor neuron and probably also in the DD motor neurons and in RIA interneurons. Functionally, sufficient for synaptic vesicle trafficking in the DA9 motor neuron. This chain is Cyclin-dependent kinase 17, found in Caenorhabditis elegans.